A 1493-amino-acid chain; its full sequence is Mitogen-activated protein kinase kinase kinase 1 (1493 aa).

A compositionally biased stretch (low complexity) spans 1 to 23 (MAAAAGDRASSSGFPGAAAASPE). 2 disordered regions span residues 1 to 178 (MAAA…PEER) and 194 to 300 (HEWL…EETS). At alanine 2 the chain carries N-acetylalanine. Position 21 is a phosphoserine (serine 21). Residues 24-35 (AGGGGGGGGALQ) are compositionally biased toward gly residues. Residues 36–46 (GSGAPAAGAAG) are compositionally biased toward low complexity. Residues 89 to 99 (PPCPSTSPSPE) are compositionally biased toward pro residues. The span at 140-156 (ARSPAGAEPPSAAAPSG) shows a compositional bias: low complexity. At serine 142 the chain carries Phosphoserine. The span at 157-178 (REMENKETLKGLHKMEDRPEER) shows a compositional bias: basic and acidic residues. Over residues 235–256 (SAAPAPKGRRSPSPGSSPSGRS) the composition is skewed to low complexity. Position 270 is a phosphoserine (serine 270). Threonine 280 is subject to Phosphothreonine. Phosphoserine is present on residues serine 287, serine 292, and serine 295. Residues 333-361 (YRVFIGPQNCSCGRGAFCIHLLFVMLRVF) form an SWIM-type zinc finger. Residues 411–428 (SNSHTLSSSSTSTSSSEN) are compositionally biased toward low complexity. The tract at residues 411-431 (SNSHTLSSSSTSTSSSENSIK) is disordered. An RING-type zinc finger spans residues 438-487 (CPICLLGMLDEESLTVCEDGCRNKLHHHCMSIWAEECRRNREPLICPLCR). Phosphoserine occurs at positions 502 and 526. 2 disordered regions span residues 506 to 531 (SPAS…RRNQ) and 895 to 914 (EHTV…RLSA). Positions 512–527 (AVQQPSSPQQPVAGSQ) are enriched in low complexity. Serine 915 is subject to Phosphoserine. Disordered regions lie at residues 927–957 (SVGL…LNSS) and 992–1066 (PCKI…TLDL). The span at 998–1013 (ASPQTQRKFSLQFQRN) shows a compositional bias: polar residues. Phosphoserine occurs at positions 999 and 1024. Residues 1049 to 1063 (GSTSKLGDATKSSMT) show a composition bias toward polar residues. A Protein kinase domain is found at 1224-1489 (WLKGQQIGLG…SRELLKHPVF (266 aa)). ATP-binding positions include 1230-1238 (IGLGAFSSC) and lysine 1253. The active-site Proton acceptor is aspartate 1350. A phosphothreonine; by autocatalysis mark is found at threonine 1381 and threonine 1393.

This sequence belongs to the protein kinase superfamily. STE Ser/Thr protein kinase family. MAP kinase kinase kinase subfamily. Binds both upstream activators and downstream substrates in multimolecular complexes through its N-terminus. Oligomerizes after binding MAP4K2 or TRAF2. Interacts with AXIN1. Interacts (via the kinase catalytic domain) with STK38. Interacts with GRIPAP1. The cofactor is Mg(2+). Post-translationally, autophosphorylated. Highly expressed in the heart and spleen while a lower level expression is seen in the liver.

The catalysed reaction is L-seryl-[protein] + ATP = O-phospho-L-seryl-[protein] + ADP + H(+). It catalyses the reaction L-threonyl-[protein] + ATP = O-phospho-L-threonyl-[protein] + ADP + H(+). With respect to regulation, activated by autophosphorylation on Thr-1381 and Thr-1393 following oligomerization. In terms of biological role, component of a protein kinase signal transduction cascade. Activates the ERK and JNK kinase pathways by phosphorylation of MAP2K1 and MAP2K4. May phosphorylate the MAPK8/JNK1 kinase. Activates CHUK and IKBKB, the central protein kinases of the NF-kappa-B pathway. The sequence is that of Mitogen-activated protein kinase kinase kinase 1 (Map3k1) from Mus musculus (Mouse).